Here is a 234-residue protein sequence, read N- to C-terminus: Proteasome subunit alpha type-2 (234 aa).

The protein belongs to the peptidase T1A family. In terms of assembly, the 26S proteasome consists of a 20S proteasome core and two 19S regulatory subunits. The 20S proteasome core is composed of 28 subunits that are arranged in four stacked rings, resulting in a barrel-shaped structure. The two end rings are each formed by seven alpha subunits, and the two central rings are each formed by seven beta subunits. The catalytic chamber with the active sites is on the inside of the barrel. Interacts with Rpn6.

The protein localises to the cytoplasm. The protein resides in the nucleus. The proteasome is a multicatalytic proteinase complex which is characterized by its ability to cleave peptides with Arg, Phe, Tyr, Leu, and Glu adjacent to the leaving group at neutral or slightly basic pH. The proteasome has an ATP-dependent proteolytic activity. This Drosophila melanogaster (Fruit fly) protein is Proteasome subunit alpha type-2 (Prosalpha2).